The sequence spans 281 residues: Feruloyl esterase A (281 aa).

A signal peptide spans 1–21 (MKQFSAKYALILLATAGQALA). Cystine bridges form between cysteine 50-cysteine 279, cysteine 112-cysteine 115, and cysteine 248-cysteine 255. Aspartate 98 is a substrate binding site. N-linked (GlcNAc...) asparagine glycosylation is present at asparagine 100. Tyrosine 101 serves as a coordination point for substrate. Catalysis depends on serine 154, which acts as the Nucleophile. The active-site Charge relay system is the aspartate 215. Histidine 268 provides a ligand contact to substrate. Histidine 268 functions as the Charge relay system in the catalytic mechanism.

Post-translationally, glycosylated.

It localises to the secreted. It carries out the reaction feruloyl-polysaccharide + H2O = ferulate + polysaccharide.. Its activity is regulated as follows. Inhibited by the specific serine esterase inhibitor diisopropylfluorophosphate. Involved in degradation of plant cell walls. Hydrolyzes the feruloyl-arabinose ester bond in arabinoxylans, and the feruloyl-galactose ester bond in pectin. Binds to cellulose. The polypeptide is Feruloyl esterase A (faeA) (Aspergillus niger).